Consider the following 251-residue polypeptide: Hydroxyacylglutathione hydrolase (251 aa).

Zn(2+)-binding residues include histidine 53, histidine 55, aspartate 57, histidine 58, histidine 110, aspartate 127, and histidine 165.

It belongs to the metallo-beta-lactamase superfamily. Glyoxalase II family. In terms of assembly, monomer. Zn(2+) is required as a cofactor.

The enzyme catalyses an S-(2-hydroxyacyl)glutathione + H2O = a 2-hydroxy carboxylate + glutathione + H(+). It functions in the pathway secondary metabolite metabolism; methylglyoxal degradation; (R)-lactate from methylglyoxal: step 2/2. Functionally, thiolesterase that catalyzes the hydrolysis of S-D-lactoyl-glutathione to form glutathione and D-lactic acid. The chain is Hydroxyacylglutathione hydrolase from Salmonella gallinarum (strain 287/91 / NCTC 13346).